Here is a 364-residue protein sequence, read N- to C-terminus: Spermatogenesis-associated protein 22 (364 aa).

5 stretches are compositionally biased toward polar residues: residues 1 to 13 (MKRN…TRST), 30 to 48 (QPLT…NASD), 73 to 108 (KTVN…SKSD), 137 to 169 (LMTN…LPNQ), and 177 to 189 (QTKS…STMR). 2 disordered regions span residues 1-51 (MKRN…DNYD) and 70-189 (PLTK…STMR).

As to quaternary structure, component of a multiprotein complex with MEIOB and RPA2. Interacts with MEIOB. Interacts with the complex BRME1:HSF2BP:BRCA2.

The protein resides in the chromosome. Its function is as follows. Meiosis-specific protein required for homologous recombination in meiosis I. This Bos taurus (Bovine) protein is Spermatogenesis-associated protein 22 (SPATA22).